We begin with the raw amino-acid sequence, 241 residues long: Phosphatidylcholine synthase (241 aa).

At 1-15 the chain is on the cytoplasmic side; the sequence is MKFFNYRRVPYAEIR. The helical transmembrane segment at 16 to 36 threads the bilayer; the sequence is AFSVHILTASGSFLAFLGVVA. The Periplasmic portion of the chain corresponds to 37–41; sequence AAEHR. A helical transmembrane segment spans residues 42–62; that stretch reads FVDMFWWLGLALLVDGIDGPI. The Cytoplasmic segment spans residues 63 to 76; the sequence is ARKVQVKEVLPNWS. Residues 77–97 form a helical membrane-spanning segment; sequence GDTLDNVIDYVTYVLLPAFAL. At 98 to 100 the chain is on the periplasmic side; sequence YQS. The chain crosses the membrane as a helical span at residues 101-121; that stretch reads GMIGEPWSFVAAGAIVVSSAI. Over 122–133 the chain is Cytoplasmic; sequence YYADMGMKTDEY. A helical transmembrane segment spans residues 134–154; that stretch reads FFSGFPVVWNMVVFTLFVIQA. At 155-156 the chain is on the periplasmic side; that stretch reads SE. The chain crosses the membrane as a helical span at residues 157–177; it reads VTASIVVFLSVILTFLPINFL. Topologically, residues 178-187 are cytoplasmic; that stretch reads HPVRVKRLRP. A helical membrane pass occupies residues 188–208; it reads LNLGIFLVWSVLGMYALLLHF. The Periplasmic segment spans residues 209-211; it reads ETP. A helical transmembrane segment spans residues 212–232; that stretch reads PWVVVGVVATGLYLYVIGFIL. The Cytoplasmic portion of the chain corresponds to 233 to 241; it reads QIFPKLGRA.

The protein belongs to the CDP-alcohol phosphatidyltransferase class-I family. It depends on Mn(2+) as a cofactor.

It is found in the cell inner membrane. It carries out the reaction a CDP-1,2-diacyl-sn-glycerol + choline = a 1,2-diacyl-sn-glycero-3-phosphocholine + CMP + H(+). Its activity is regulated as follows. Activated by CDP-diacylglycerol especially in the presence of Triton X-100 (0.1% w/v) at concentrations where micelles are formed. Maximal activation by Triton X-100 at 0.2% w/v, but higher concentrations become inhibitory. Inhibited by EDTA and high concentrations of choline. Condenses choline with CDP-diglyceride to produce phosphatidylcholine and CMP. This is Phosphatidylcholine synthase (pcs) from Rhizobium meliloti (strain 1021) (Ensifer meliloti).